The sequence spans 300 residues: (R)-3-hydroxydecanoyl-ACP:CoA transacylase (300 aa).

The region spanning 29–253 (TIILVNGSLS…HTIRNAGHFI (225 aa)) is the AB hydrolase-1 domain.

Its pathway is polyester biosynthesis; polyhydroxyalkanoate biosynthesis. In terms of biological role, catalyzes the transfer of the acyl moiety from in vitro synthesized 3-hydroxydecanoyl-CoA to acyl carrier protein. This is (R)-3-hydroxydecanoyl-ACP:CoA transacylase (phaG) from Pseudomonas aeruginosa (strain ATCC 15692 / DSM 22644 / CIP 104116 / JCM 14847 / LMG 12228 / 1C / PRS 101 / PAO1).